The sequence spans 1142 residues: Collagen alpha-1(XIX) chain (1142 aa).

Residues 1–23 (MRLTGPWKLWLWMSIFLLPASTS) form the signal peptide. The Laminin G-like domain maps to 50–234 (NKLEVSGFDL…LHQLKIYCSA (185 aa)). 3 disordered regions span residues 288-680 (IPNK…GDPI), 704-1009 (PGLK…PGIP), and 1053-1142 (YGRP…TGGN). Collagen-like domains follow at residues 292–349 (GEAG…GEKG), 350–391 (DPAL…ALPG), and 392–433 (SLGI…GIQG). The triple-helical region 1 (COL1) stretch occupies residues 292-351 (GEAGLPGAPGSPGQKGHKGEPGENGLHGAPGFPGQKGEQGFEGSKGETGEKGEQGEKGDP). Residues 335-350 (SKGETGEKGEQGEKGD) show a composition bias toward basic and acidic residues. Residues 370 to 429 (GPPGPKGEKGDTGPPGPPALPGSLGIQGPQGPPGKEGQRGRRGKTGPPGKPGPPGPPGPP) are triple-helical region 2 (COL2). Over residues 390-404 (PGSLGIQGPQGPPGK) the composition is skewed to low complexity. Over residues 417 to 429 (PGKPGPPGPPGPP) the composition is skewed to pro residues. Basic and acidic residues-rich tracts occupy residues 444 to 463 (KDNK…DKGE) and 478 to 496 (QKGE…DRGE). A triple-helical region 3 (COL3) region spans residues 448–688 (GNDEHEAGGL…PIALPLLGDI (241 aa)). Collagen-like domains follow at residues 474–516 (GPKG…GPPG), 568–624 (GPPG…GPQG), 626–678 (GIPG…PPGD), 728–778 (KGDI…APGP), 779–814 (TGPP…PPGP), 845–903 (GPPG…VPGE), 904–947 (PGER…GDRG), and 948–1004 (PKGE…GSPG). Residues 640-651 (PGIQGPRGLPGL) are compositionally biased toward low complexity. A triple-helical region 4 (COL4) region spans residues 700–818 (QASVPGLKSN…PGPPGPPGIP (119 aa)). Basic and acidic residues-rich tracts occupy residues 720 to 731 (GKYDSMARKGDI) and 743 to 752 (EGPKGSKGER). Composition is skewed to pro residues over residues 806 to 817 (PGKPGPPGPPGI) and 840 to 852 (YPGP…PKGD). A triple-helical region 5 (COL5) region spans residues 833–1012 (GGVNVPSYPG…PGIPGIPADA (180 aa)). A compositionally biased stretch (basic and acidic residues) spans 943–954 (PGDRGPKGERGD). Residues 952–954 (RGD) carry the Cell attachment site motif. Positions 1054 to 1111 (GRPGPPGKDGLPGPPGDPGPQGYRGQKGERGEPGIGLPGSPGLPGTSALGLPGSPGAP) are triple-helical region 6 (COL6). A compositionally biased stretch (low complexity) spans 1093-1107 (SPGLPGTSALGLPGS). Residues 1108-1119 (PGAPGPQGPPGP) show a composition bias toward pro residues.

The protein belongs to the fibril-associated collagens with interrupted helices (FACIT) family. In terms of assembly, oligomer; disulfide-linked. Post-translationally, prolines at the third position of the tripeptide repeating unit (G-X-Y) are hydroxylated in some or all of the chains. Localized to vascular, neuronal, mesenchymal, and some epithelial basement membrane zones in umbilical cord.

It localises to the secreted. The protein localises to the extracellular space. It is found in the extracellular matrix. May act as a cross-bridge between fibrils and other extracellular matrix molecules. Involved in skeletal myogenesis in the developing esophagus. May play a role in organization of the pericellular matrix or the sphinteric smooth muscle. The sequence is that of Collagen alpha-1(XIX) chain (COL19A1) from Homo sapiens (Human).